The sequence spans 463 residues: Chromosomal replication initiator protein DnaA (463 aa).

Residues 1-83 are domain I, interacts with DnaA modulators; sequence MSTNQIILTD…LQLFQHYNNT (83 aa). The interval 83–124 is domain II; the sequence is TIKSIEIITKELPGITQTVIALPTKTFADIGSSELNAENIFS. The interval 125–343 is domain III, AAA+ region; the sequence is TLDVRFTFDN…GALNKVIAHS (219 aa). ATP-binding residues include Gly-171, Gly-173, Lys-174, and Thr-175. The domain IV, binds dsDNA stretch occupies residues 344–463; it reads NFTLKEITLE…INLLMKILQN (120 aa).

It belongs to the DnaA family. Oligomerizes as a right-handed, spiral filament on DNA at oriC.

Its subcellular location is the cytoplasm. Its function is as follows. Plays an essential role in the initiation and regulation of chromosomal replication. ATP-DnaA binds to the origin of replication (oriC) to initiate formation of the DNA replication initiation complex once per cell cycle. Binds the DnaA box (a 9 base pair repeat at the origin) and separates the double-stranded (ds)DNA. Forms a right-handed helical filament on oriC DNA; dsDNA binds to the exterior of the filament while single-stranded (ss)DNA is stabiized in the filament's interior. The ATP-DnaA-oriC complex binds and stabilizes one strand of the AT-rich DNA unwinding element (DUE), permitting loading of DNA polymerase. After initiation quickly degrades to an ADP-DnaA complex that is not apt for DNA replication. Binds acidic phospholipids. This is Chromosomal replication initiator protein DnaA from Rickettsia massiliae (strain Mtu5).